A 236-amino-acid chain; its full sequence is 2,3,4,5-tetrahydropyridine-2,6-dicarboxylate N-acetyltransferase (236 aa).

It belongs to the transferase hexapeptide repeat family. DapH subfamily.

It carries out the reaction (S)-2,3,4,5-tetrahydrodipicolinate + acetyl-CoA + H2O = L-2-acetamido-6-oxoheptanedioate + CoA. It functions in the pathway amino-acid biosynthesis; L-lysine biosynthesis via DAP pathway; LL-2,6-diaminopimelate from (S)-tetrahydrodipicolinate (acetylase route): step 1/3. Its function is as follows. Catalyzes the transfer of an acetyl group from acetyl-CoA to tetrahydrodipicolinate. The chain is 2,3,4,5-tetrahydropyridine-2,6-dicarboxylate N-acetyltransferase from Brevibacillus brevis (strain 47 / JCM 6285 / NBRC 100599).